The following is a 228-amino-acid chain: Large ribosomal subunit protein uL4 (228 aa).

Disordered stretches follow at residues 45 to 102 (GRQG…SQRT) and 208 to 228 (PAKG…EANQ). Positions 208 to 221 (PAKGKTAKAAATSG) are enriched in low complexity.

The protein belongs to the universal ribosomal protein uL4 family. In terms of assembly, part of the 50S ribosomal subunit.

Its function is as follows. One of the primary rRNA binding proteins, this protein initially binds near the 5'-end of the 23S rRNA. It is important during the early stages of 50S assembly. It makes multiple contacts with different domains of the 23S rRNA in the assembled 50S subunit and ribosome. Functionally, forms part of the polypeptide exit tunnel. The polypeptide is Large ribosomal subunit protein uL4 (Saccharopolyspora erythraea (strain ATCC 11635 / DSM 40517 / JCM 4748 / NBRC 13426 / NCIMB 8594 / NRRL 2338)).